Consider the following 153-residue polypeptide: Inner membrane protein YjiG (153 aa).

Over M1–N31 the chain is Periplasmic. A helical membrane pass occupies residues V32–G52. The Cytoplasmic segment spans residues H53 to A68. The next 2 membrane-spanning stretches (helical) occupy residues A69–L89 and A90–M110. At G111 to P132 the chain is on the cytoplasmic side. The chain crosses the membrane as a helical span at residues H133–V153.

This sequence belongs to the SpmB family.

The protein resides in the cell inner membrane. The polypeptide is Inner membrane protein YjiG (yjiG) (Escherichia coli O157:H7).